The primary structure comprises 448 residues: UDP-N-acetylmuramoylalanine--D-glutamate ligase (448 aa).

116-122 contributes to the ATP binding site; the sequence is GSNAKST.

This sequence belongs to the MurCDEF family.

The protein resides in the cytoplasm. It carries out the reaction UDP-N-acetyl-alpha-D-muramoyl-L-alanine + D-glutamate + ATP = UDP-N-acetyl-alpha-D-muramoyl-L-alanyl-D-glutamate + ADP + phosphate + H(+). It functions in the pathway cell wall biogenesis; peptidoglycan biosynthesis. Its function is as follows. Cell wall formation. Catalyzes the addition of glutamate to the nucleotide precursor UDP-N-acetylmuramoyl-L-alanine (UMA). This chain is UDP-N-acetylmuramoylalanine--D-glutamate ligase, found in Pseudomonas syringae pv. tomato (strain ATCC BAA-871 / DC3000).